Here is a 323-residue protein sequence, read N- to C-terminus: Olfactory receptor 5P58 (323 aa).

The Extracellular portion of the chain corresponds to 1–28 (MAFLEDGNHTAVTEFILVGLTDDPVLKV). The N-linked (GlcNAc...) asparagine glycan is linked to Asn-8. A helical transmembrane segment spans residues 29 to 49 (ILFTIILCIYLVTVSGNLSTI). Topologically, residues 50 to 57 (LLIRVSSQ) are cytoplasmic. Residues 58–78 (LHHPMYFFLSHLASVDLGYSS) form a helical membrane-spanning segment. Residues 79–102 (SVTPNMLINFLAENNTISYIGCSI) lie on the Extracellular side of the membrane. An N-linked (GlcNAc...) asparagine glycan is attached at Asn-92. A disulfide bond links Cys-100 and Cys-192. A helical transmembrane segment spans residues 103 to 123 (QFGSATFFGVLECFLLAVMAY). At 124 to 136 (DRFVAICNPLLYS) the chain is on the cytoplasmic side. Residues 137 to 157 (IKMSTQVCVKLVVGSYIGSSL) traverse the membrane as a helical segment. The Extracellular segment spans residues 158 to 199 (NASFVTVSIFNLLFCGPNKINHFFCDFDPLIELSCSDVSVPV). The helical transmembrane segment at 200–220 (AVTSCSAGLITMITVFVIAVS) threads the bilayer. Over 221-240 (YTYILITVLKMRSTEGRHKA) the chain is Cytoplasmic. The helical transmembrane segment at 241–261 (FSTCTSHLTAVTLFYGTVTFI) threads the bilayer. Residues 262 to 274 (YVMPKSNYSTDQN) lie on the Extracellular side of the membrane. N-linked (GlcNAc...) asparagine glycosylation is present at Asn-268. Residues 275–295 (KVVSVFYMVVIPMLNPLIYSL) form a helical membrane-spanning segment. The Cytoplasmic segment spans residues 296 to 323 (RNNEIKGALKRQLGKKIFSQSNILFCKS).

This sequence belongs to the G-protein coupled receptor 1 family.

The protein resides in the cell membrane. Its function is as follows. Potential odorant receptor. The protein is Olfactory receptor 5P58 of Mus musculus (Mouse).